The primary structure comprises 256 residues: UPF0280 protein MTH_727 (256 aa).

This sequence belongs to the UPF0280 family.

The chain is UPF0280 protein MTH_727 from Methanothermobacter thermautotrophicus (strain ATCC 29096 / DSM 1053 / JCM 10044 / NBRC 100330 / Delta H) (Methanobacterium thermoautotrophicum).